Reading from the N-terminus, the 66-residue chain is Large ribosomal subunit protein bL35 (66 aa).

This sequence belongs to the bacterial ribosomal protein bL35 family.

This Treponema pallidum (strain Nichols) protein is Large ribosomal subunit protein bL35.